Here is a 370-residue protein sequence, read N- to C-terminus: 3-dehydroquinate synthase (370 aa).

NAD(+)-binding positions include 112–116, 136–137, Lys149, Lys158, and 176–179; these read GVIGD, TT, and TLAT. Zn(2+)-binding residues include Glu191, His254, and His276.

The protein belongs to the sugar phosphate cyclases superfamily. Dehydroquinate synthase family. Requires Co(2+) as cofactor. It depends on Zn(2+) as a cofactor. NAD(+) is required as a cofactor.

The protein localises to the cytoplasm. It carries out the reaction 7-phospho-2-dehydro-3-deoxy-D-arabino-heptonate = 3-dehydroquinate + phosphate. It participates in metabolic intermediate biosynthesis; chorismate biosynthesis; chorismate from D-erythrose 4-phosphate and phosphoenolpyruvate: step 2/7. Functionally, catalyzes the conversion of 3-deoxy-D-arabino-heptulosonate 7-phosphate (DAHP) to dehydroquinate (DHQ). This chain is 3-dehydroquinate synthase, found in Xylella fastidiosa (strain M23).